The primary structure comprises 366 residues: Anhydro-N-acetylmuramic acid kinase (366 aa).

15–22 (GTSLDGVD) is a binding site for ATP.

It belongs to the anhydro-N-acetylmuramic acid kinase family.

It catalyses the reaction 1,6-anhydro-N-acetyl-beta-muramate + ATP + H2O = N-acetyl-D-muramate 6-phosphate + ADP + H(+). Its pathway is amino-sugar metabolism; 1,6-anhydro-N-acetylmuramate degradation. It participates in cell wall biogenesis; peptidoglycan recycling. Functionally, catalyzes the specific phosphorylation of 1,6-anhydro-N-acetylmuramic acid (anhMurNAc) with the simultaneous cleavage of the 1,6-anhydro ring, generating MurNAc-6-P. Is required for the utilization of anhMurNAc either imported from the medium or derived from its own cell wall murein, and thus plays a role in cell wall recycling. This chain is Anhydro-N-acetylmuramic acid kinase, found in Hydrogenovibrio crunogenus (strain DSM 25203 / XCL-2) (Thiomicrospira crunogena).